We begin with the raw amino-acid sequence, 374 residues long: Aclacinomycin 10-hydroxylase RdmB (374 aa).

Positions 171, 190, 213, 240, 241, and 255 each coordinate S-adenosyl-L-methionine.

The protein belongs to the class I-like SAM-binding methyltransferase superfamily. Cation-independent O-methyltransferase family. As to quaternary structure, homodimer. Homotetramer in solution. Tetramers might not be very stable in solution.

It carries out the reaction 15-demethylaclacinomycin T + AH2 + O2 = 10-decarboxymethylaclacinomycin T + A + CO2 + H2O. The catalysed reaction is 10-carboxy-13-deoxycarminomycin + AH2 + O2 + H(+) = 10-hydroxy-13-deoxycarminomycin + A + CO2 + H2O. It catalyses the reaction 10-hydroxy-13-deoxycarminomycin + S-adenosyl-L-methionine = 10-hydroxy-13-deoxydaunorubicin + S-adenosyl-L-homocysteine + H(+). Its pathway is antibiotic biosynthesis; rhodomycin biosynthesis. It functions in the pathway antibiotic biosynthesis; aclacinomycin biosynthesis. The hydroxylation reaction requires S-adenosyl-L-methionine (SAM) as a cofactor. S-adenosine-L-homocysteine and sinefungin (a SAM analog) can also support the decarboxylative hydroxylation activity with 10-carboxy-13-deoxycarminomycin as substrate. SAM and its analogs are considered an essential structural ligand to maintain ternary structural integrity and the proper binding mode and orientation of electron-rich substrates during decarboxylative hydroxylation of C-10 by RdmB. Involved in the biosynthesis of anthracyclines, an important group of aromatic polyketide antibiotics used in cancer chemotherapy. Acts as a 10-hydroxylase to catalyze a decarboxylative hydroxylation reaction on anthracyclines. During biosynthesis of rhodomycin, it catalyzes the removal of the carboxylic group at the C-10 position of 15-demethoxy-epsilon-rhodomycin coupled to hydroxylation at the same C-10 position to yield beta-rhodomycin. In vitro, can also catalyze the removal of the carboxylic group at the C-10 position of 15-demethoxyaclacinomycin T coupled to hydroxylation at the same C-10 position to yield 10-decarboxymethylaclacinomycin T. It can also use 10-carboxy-13-deoxycarminomycin, an analog of 15-demethoxy-epsilon-rhodomycin, to yield 10-hydroxy-13-deoxycarminomycin. Its function is as follows. In addition to its hydroxylation activity, it can act in vitro as a S-adenosyl-L-methionine-dependent O-methyltransferase and catalyze the 4-O-methylation of 10-hydroxy-13-deoxycarminomycin to 10-hydroxy-13-deoxydaunorubicin. The triglycosyl group of anthracyclines prevents the methylation reaction. The polypeptide is Aclacinomycin 10-hydroxylase RdmB (Streptomyces purpurascens).